Here is a 366-residue protein sequence, read N- to C-terminus: Reticulon-4-interacting protein 1, mitochondrial (366 aa).

Residues 1–20 (MIEKMILRRFFSTKSSTMRA) constitute a mitochondrion transit peptide.

The protein belongs to the zinc-containing alcohol dehydrogenase family. Quinone oxidoreductase subfamily. Expressed in pharynx, muscles and intestine.

The protein resides in the mitochondrion. Plays a role in oxygen metabolism in the mitochondria by regulating the levels of reactive oxygen species (ROS) thereby conferring resistance to oxidative stress. Involved in resistance to P.aeruginosa PA14 infection. Regulates lifespan. The sequence is that of Reticulon-4-interacting protein 1, mitochondrial from Caenorhabditis elegans.